A 316-amino-acid chain; its full sequence is 4-hydroxy-3-methylbut-2-enyl diphosphate reductase (316 aa).

Cys-12 provides a ligand contact to [4Fe-4S] cluster. (2E)-4-hydroxy-3-methylbut-2-enyl diphosphate-binding residues include His-43 and His-81. Positions 43 and 81 each coordinate dimethylallyl diphosphate. Positions 43 and 81 each coordinate isopentenyl diphosphate. [4Fe-4S] cluster is bound at residue Cys-103. A (2E)-4-hydroxy-3-methylbut-2-enyl diphosphate-binding site is contributed by His-131. His-131 provides a ligand contact to dimethylallyl diphosphate. Position 131 (His-131) interacts with isopentenyl diphosphate. The active-site Proton donor is Glu-133. Thr-170 is a (2E)-4-hydroxy-3-methylbut-2-enyl diphosphate binding site. Cys-198 provides a ligand contact to [4Fe-4S] cluster. 3 residues coordinate (2E)-4-hydroxy-3-methylbut-2-enyl diphosphate: Ser-226, Asn-228, and Ser-271. Residues Ser-226, Asn-228, and Ser-271 each coordinate dimethylallyl diphosphate. Isopentenyl diphosphate contacts are provided by Ser-226, Asn-228, and Ser-271.

The protein belongs to the IspH family. The cofactor is [4Fe-4S] cluster.

It catalyses the reaction isopentenyl diphosphate + 2 oxidized [2Fe-2S]-[ferredoxin] + H2O = (2E)-4-hydroxy-3-methylbut-2-enyl diphosphate + 2 reduced [2Fe-2S]-[ferredoxin] + 2 H(+). The catalysed reaction is dimethylallyl diphosphate + 2 oxidized [2Fe-2S]-[ferredoxin] + H2O = (2E)-4-hydroxy-3-methylbut-2-enyl diphosphate + 2 reduced [2Fe-2S]-[ferredoxin] + 2 H(+). The protein operates within isoprenoid biosynthesis; dimethylallyl diphosphate biosynthesis; dimethylallyl diphosphate from (2E)-4-hydroxy-3-methylbutenyl diphosphate: step 1/1. It functions in the pathway isoprenoid biosynthesis; isopentenyl diphosphate biosynthesis via DXP pathway; isopentenyl diphosphate from 1-deoxy-D-xylulose 5-phosphate: step 6/6. Catalyzes the conversion of 1-hydroxy-2-methyl-2-(E)-butenyl 4-diphosphate (HMBPP) into a mixture of isopentenyl diphosphate (IPP) and dimethylallyl diphosphate (DMAPP). Acts in the terminal step of the DOXP/MEP pathway for isoprenoid precursor biosynthesis. This chain is 4-hydroxy-3-methylbut-2-enyl diphosphate reductase, found in Geobacillus thermodenitrificans (strain NG80-2).